The sequence spans 1410 residues: SNF2 domain-containing protein CLASSY 3 (1410 aa).

The segment covering 1–12 (MECIGKRVKSRS) has biased composition (basic residues). Disordered regions lie at residues 1–74 (MECI…SVPN), 87–108 (DLNV…SEQN), 209–330 (GEIE…PIKR), 344–376 (RSGS…QREV), 428–593 (NVSK…LKDK), and 632–654 (EDEA…REDH). The Nuclear localization signal 1 motif lies at 22–29 (RKKMETVA). Positions 95 to 108 (GPSSSRLTDGSEQN) are enriched in polar residues. The segment covering 245-266 (SDGEDSSSETDEEEEENQDSED) has biased composition (acidic residues). Residues 248–278 (EDSSSETDEEEEENQDSEDNNTKDNVTVESL) adopt a coiled-coil conformation. The segment covering 276-301 (ESLSSEDPSSSSSSSSSSSSSSSSSS) has biased composition (low complexity). The segment covering 306–323 (SYVKEVVGDNRDDDDLRK) has biased composition (basic and acidic residues). The Nuclear localization signal 2 motif lies at 328–335 (IKRVSLVE). Over residues 351–376 (KPRERDNKIQKLNHREEEKKERQREV) the composition is skewed to basic and acidic residues. Residues 356 to 377 (DNKIQKLNHREEEKKERQREVV) are a coiled coil. The span at 428–446 (NVSKYEDSVSINSGKTTGA) shows a compositional bias: polar residues. Composition is skewed to basic and acidic residues over residues 450–463 (PEVE…ELNT) and 488–504 (EPSR…KEVQ). Residues 576 to 587 (SSISSGDGYESD) are compositionally biased toward low complexity. The Helicase ATP-binding domain maps to 850 to 1060 (FENSDETGGC…CNVLGLARPK (211 aa)). ATP is bound at residue 863 to 870 (HAPGTGKT). Positions 1011–1014 (DEAH) match the DEAH box motif. The Nuclear localization signal 3 signature appears at 1132 to 1139 (QRRVLESI). A Helicase C-terminal domain is found at 1206–1359 (EFVELCEVIK…ELVFACSSRH (154 aa)).

It belongs to the SNF2/RAD54 helicase family. Interacts with NRPD1.

It is found in the nucleus. Its function is as follows. Probable chromatin remodeling factor. In Arabidopsis thaliana (Mouse-ear cress), this protein is SNF2 domain-containing protein CLASSY 3 (CLSY3).